The following is a 448-amino-acid chain: Phosphoglucosamine mutase (448 aa).

Residue serine 102 is the Phosphoserine intermediate of the active site. 4 residues coordinate Mg(2+): serine 102, aspartate 241, aspartate 243, and aspartate 245. Serine 102 is modified (phosphoserine).

This sequence belongs to the phosphohexose mutase family. Mg(2+) is required as a cofactor. Post-translationally, activated by phosphorylation.

The catalysed reaction is alpha-D-glucosamine 1-phosphate = D-glucosamine 6-phosphate. In terms of biological role, catalyzes the conversion of glucosamine-6-phosphate to glucosamine-1-phosphate. This Ruegeria pomeroyi (strain ATCC 700808 / DSM 15171 / DSS-3) (Silicibacter pomeroyi) protein is Phosphoglucosamine mutase.